The chain runs to 59 residues: U-reduvitoxin-Pr6a (59 aa).

A signal peptide spans Met1–Gly19. 3 cysteine pairs are disulfide-bonded: Cys31–Cys46, Cys38–Cys51, and Cys45–Cys58.

The protein belongs to the venom Ptu1-like knottin family. As to expression, expressed by the venom gland.

It localises to the secreted. Functionally, binds reversibly and blocks P/Q-type voltage-gated calcium channels (Cav). In Platymeris rhadamanthus (Red spot assassin bug), this protein is U-reduvitoxin-Pr6a.